Here is a 174-residue protein sequence, read N- to C-terminus: Crossover junction endodeoxyribonuclease RuvC (174 aa).

Active-site residues include Asp-8, Glu-67, and Asp-139. The Mg(2+) site is built by Asp-8, Glu-67, and Asp-139.

This sequence belongs to the RuvC family. In terms of assembly, homodimer which binds Holliday junction (HJ) DNA. The HJ becomes 2-fold symmetrical on binding to RuvC with unstacked arms; it has a different conformation from HJ DNA in complex with RuvA. In the full resolvosome a probable DNA-RuvA(4)-RuvB(12)-RuvC(2) complex forms which resolves the HJ. Requires Mg(2+) as cofactor.

It localises to the cytoplasm. The catalysed reaction is Endonucleolytic cleavage at a junction such as a reciprocal single-stranded crossover between two homologous DNA duplexes (Holliday junction).. Its function is as follows. The RuvA-RuvB-RuvC complex processes Holliday junction (HJ) DNA during genetic recombination and DNA repair. Endonuclease that resolves HJ intermediates. Cleaves cruciform DNA by making single-stranded nicks across the HJ at symmetrical positions within the homologous arms, yielding a 5'-phosphate and a 3'-hydroxyl group; requires a central core of homology in the junction. The consensus cleavage sequence is 5'-(A/T)TT(C/G)-3'. Cleavage occurs on the 3'-side of the TT dinucleotide at the point of strand exchange. HJ branch migration catalyzed by RuvA-RuvB allows RuvC to scan DNA until it finds its consensus sequence, where it cleaves and resolves the cruciform DNA. The chain is Crossover junction endodeoxyribonuclease RuvC from Pseudomonas putida (strain ATCC 700007 / DSM 6899 / JCM 31910 / BCRC 17059 / LMG 24140 / F1).